A 341-amino-acid chain; its full sequence is Antihemorrhagic factor BJ46a (341 aa).

Residues 1–19 form the signal peptide; it reads MNSLVALVLLGQIIGSTLS. 2 consecutive Cystatin fetuin-A-type domains span residues 22–130 and 141–254; these read VRGD…AKCH and RNCP…SDCV. A Cell attachment site motif is present at residues 23-25; that stretch reads RGD. 6 disulfides stabilise this stretch: Cys-28/Cys-332, Cys-85/Cys-96, Cys-110/Cys-129, Cys-143/Cys-146, Cys-205/Cys-217, and Cys-230/Cys-253. Asn-95 carries N-linked (GlcNAc...) asparagine glycosylation. Residue Asn-204 is glycosylated (N-linked (GlcNAc...) asparagine). 2 N-linked (GlcNAc...) asparagine glycosylation sites follow: Asn-282 and Asn-293.

As to quaternary structure, homodimer. Expressed by the liver.

It localises to the secreted. Its function is as follows. Potent inhibitor of hemorrhagic activity but also proteolytic activities of atrolysin C and jararhagin. Inhibition occurs by formation of a non-covalent complex between BJ46a and the proteinases at their metalloproteinase domains. The sequence is that of Antihemorrhagic factor BJ46a from Bothrops jararaca (Jararaca).